The chain runs to 283 residues: Pantothenate synthetase (283 aa).

34–41 (MGALHEGH) contributes to the ATP binding site. Histidine 41 acts as the Proton donor in catalysis. Residue glutamine 65 coordinates (R)-pantoate. Glutamine 65 contributes to the beta-alanine binding site. ATP is bound at residue 152 to 155 (GQKD). Position 158 (glutamine 158) interacts with (R)-pantoate. Residues valine 181 and 189-192 (MSSR) each bind ATP.

It belongs to the pantothenate synthetase family. Homodimer.

It is found in the cytoplasm. The enzyme catalyses (R)-pantoate + beta-alanine + ATP = (R)-pantothenate + AMP + diphosphate + H(+). Its pathway is cofactor biosynthesis; (R)-pantothenate biosynthesis; (R)-pantothenate from (R)-pantoate and beta-alanine: step 1/1. Catalyzes the condensation of pantoate with beta-alanine in an ATP-dependent reaction via a pantoyl-adenylate intermediate. This is Pantothenate synthetase from Nitrobacter winogradskyi (strain ATCC 25391 / DSM 10237 / CIP 104748 / NCIMB 11846 / Nb-255).